We begin with the raw amino-acid sequence, 348 residues long: Histidinol-phosphate aminotransferase (348 aa).

At Lys211 the chain carries N6-(pyridoxal phosphate)lysine.

Belongs to the class-II pyridoxal-phosphate-dependent aminotransferase family. Histidinol-phosphate aminotransferase subfamily. As to quaternary structure, homodimer. It depends on pyridoxal 5'-phosphate as a cofactor.

The enzyme catalyses L-histidinol phosphate + 2-oxoglutarate = 3-(imidazol-4-yl)-2-oxopropyl phosphate + L-glutamate. The protein operates within amino-acid biosynthesis; L-histidine biosynthesis; L-histidine from 5-phospho-alpha-D-ribose 1-diphosphate: step 7/9. The protein is Histidinol-phosphate aminotransferase of Chlorobaculum tepidum (strain ATCC 49652 / DSM 12025 / NBRC 103806 / TLS) (Chlorobium tepidum).